A 367-amino-acid chain; its full sequence is DNA replication and repair protein RecF (367 aa).

30-37 (GANGSGKT) serves as a coordination point for ATP.

The protein belongs to the RecF family.

The protein resides in the cytoplasm. The RecF protein is involved in DNA metabolism; it is required for DNA replication and normal SOS inducibility. RecF binds preferentially to single-stranded, linear DNA. It also seems to bind ATP. This is DNA replication and repair protein RecF from Pseudomonas putida (strain W619).